The following is a 294-amino-acid chain: N-acetylmuramic acid 6-phosphate etherase (294 aa).

The SIS domain occupies 54–217 (VIQSFEEEGR…STASMIGVGK (164 aa)). The active-site Proton donor is the Glu82. Glu113 is an active-site residue.

It belongs to the GCKR-like family. MurNAc-6-P etherase subfamily. As to quaternary structure, homodimer.

The enzyme catalyses N-acetyl-D-muramate 6-phosphate + H2O = N-acetyl-D-glucosamine 6-phosphate + (R)-lactate. It participates in amino-sugar metabolism; N-acetylmuramate degradation. Its function is as follows. Specifically catalyzes the cleavage of the D-lactyl ether substituent of MurNAc 6-phosphate, producing GlcNAc 6-phosphate and D-lactate. The sequence is that of N-acetylmuramic acid 6-phosphate etherase from Bacillus cereus (strain AH820).